A 349-amino-acid polypeptide reads, in one-letter code: Ferredoxin--NADP reductase 1 (349 aa).

FAD contacts are provided by Glu-36, Lys-44, Tyr-48, Val-88, Leu-123, Asp-290, and Ser-331.

The protein belongs to the ferredoxin--NADP reductase type 2 family. Homodimer. It depends on FAD as a cofactor.

It carries out the reaction 2 reduced [2Fe-2S]-[ferredoxin] + NADP(+) + H(+) = 2 oxidized [2Fe-2S]-[ferredoxin] + NADPH. The chain is Ferredoxin--NADP reductase 1 from Bacillus cytotoxicus (strain DSM 22905 / CIP 110041 / 391-98 / NVH 391-98).